The following is a 365-amino-acid chain: Phospho-N-acetylmuramoyl-pentapeptide-transferase (365 aa).

10 helical membrane passes run 3 to 23 (HIII…PILI), 54 to 74 (GIAI…ASVF), 81 to 101 (PTAS…LGFL), 119 to 139 (GKLL…LLFL), 162 to 182 (IAIG…YILV), 198 to 218 (LAAG…FWQF), 239 to 259 (LSIL…WNAA), 263 to 283 (IFMG…LSVT), 289 to 309 (LMIV…IQVV), and 342 to 362 (FWLL…ADWL).

It belongs to the glycosyltransferase 4 family. MraY subfamily. The cofactor is Mg(2+).

It localises to the cell membrane. The catalysed reaction is UDP-N-acetyl-alpha-D-muramoyl-L-alanyl-gamma-D-glutamyl-meso-2,6-diaminopimeloyl-D-alanyl-D-alanine + di-trans,octa-cis-undecaprenyl phosphate = di-trans,octa-cis-undecaprenyl diphospho-N-acetyl-alpha-D-muramoyl-L-alanyl-D-glutamyl-meso-2,6-diaminopimeloyl-D-alanyl-D-alanine + UMP. It participates in cell wall biogenesis; peptidoglycan biosynthesis. Functionally, catalyzes the initial step of the lipid cycle reactions in the biosynthesis of the cell wall peptidoglycan: transfers peptidoglycan precursor phospho-MurNAc-pentapeptide from UDP-MurNAc-pentapeptide onto the lipid carrier undecaprenyl phosphate, yielding undecaprenyl-pyrophosphoryl-MurNAc-pentapeptide, known as lipid I. This is Phospho-N-acetylmuramoyl-pentapeptide-transferase from Corynebacterium kroppenstedtii (strain DSM 44385 / JCM 11950 / CIP 105744 / CCUG 35717).